The primary structure comprises 419 residues: Alpha-galactosidase A (419 aa).

The signal sequence occupies residues 1 to 31; it reads MKLLSRDTRLVCELALCPLALVFWSILGVRA. Intrachain disulfides connect Cys-52-Cys-94 and Cys-56-Cys-63. Asn-139 is a glycosylation site (N-linked (GlcNAc...) asparagine). Cys-142 and Cys-172 are disulfide-bonded. Asp-170 acts as the Nucleophile in catalysis. A Phosphotyrosine modification is found at Tyr-186. Asn-192 carries an N-linked (GlcNAc...) asparagine glycan. Cys-202 and Cys-223 are oxidised to a cystine. 203–207 contacts substrate; sequence EWPLY. N-linked (GlcNAc...) asparagine glycosylation is present at Asn-215. The active-site Proton donor is the Asp-231. Cysteines 378 and 382 form a disulfide.

Belongs to the glycosyl hydrolase 27 family. In terms of assembly, homodimer.

It localises to the lysosome. It catalyses the reaction Hydrolysis of terminal, non-reducing alpha-D-galactose residues in alpha-D-galactosides, including galactose oligosaccharides, galactomannans and galactolipids.. It carries out the reaction a globoside Gb3Cer (d18:1(4E)) + H2O = a beta-D-Gal-(1-&gt;4)-beta-D-Glc-(1&lt;-&gt;1)-Cer(d18:1(4E)) + D-galactose. The catalysed reaction is a globoside Gb3Cer + H2O = a beta-D-galactosyl-(1-&gt;4)-beta-D-glucosyl-(1&lt;-&gt;1)-ceramide + D-galactose. Galactosylgalactosylglucosylceramidase activity is stimulated by saposin B and ammonium chloride. Functionally, catalyzes the hydrolysis of glycosphingolipids and participates in their degradation in the lysosome. This Mus musculus (Mouse) protein is Alpha-galactosidase A.